Reading from the N-terminus, the 901-residue chain is HTH-type transcriptional regulator MalT (901 aa).

Residue 39-46 participates in ATP binding; sequence SPAGYGKT. The HTH luxR-type domain maps to 829-894; that stretch reads ELIRTSPLTQ…DAVQHAQQLL (66 aa). The segment at residues 853–872 is a DNA-binding region (H-T-H motif); it reads NEQIAGELEVAATTIKTHIR.

This sequence belongs to the MalT family. In terms of assembly, monomer in solution. Oligomerizes to an active state in the presence of the positive effectors ATP and maltotriose.

With respect to regulation, activated by ATP and maltotriose, which are both required for DNA binding. Its function is as follows. Positively regulates the transcription of the maltose regulon whose gene products are responsible for uptake and catabolism of malto-oligosaccharides. Specifically binds to the promoter region of its target genes, recognizing a short DNA motif called the MalT box. This Escherichia coli (strain ATCC 8739 / DSM 1576 / NBRC 3972 / NCIMB 8545 / WDCM 00012 / Crooks) protein is HTH-type transcriptional regulator MalT.